The primary structure comprises 510 residues: Probable malate:quinone oxidoreductase (510 aa).

The protein belongs to the MQO family. Requires FAD as cofactor.

The catalysed reaction is (S)-malate + a quinone = a quinol + oxaloacetate. It participates in carbohydrate metabolism; tricarboxylic acid cycle; oxaloacetate from (S)-malate (quinone route): step 1/1. In Wigglesworthia glossinidia brevipalpis, this protein is Probable malate:quinone oxidoreductase.